The sequence spans 157 residues: Small ribosomal subunit protein bS16 (157 aa).

The span at 125–141 (KRKAAKKAAEEAAAKEA) shows a compositional bias: basic and acidic residues. Residues 125–157 (KRKAAKKAAEEAAAKEAEAEEAAEDKAEEESAE) form a disordered region. Residues 142 to 157 (EAEEAAEDKAEEESAE) are compositionally biased toward acidic residues.

It belongs to the bacterial ribosomal protein bS16 family.

This Corynebacterium kroppenstedtii (strain DSM 44385 / JCM 11950 / CIP 105744 / CCUG 35717) protein is Small ribosomal subunit protein bS16.